The following is a 497-amino-acid chain: 4,4'-diaponeurosporene oxygenase (497 aa).

Residue 7–19 (VIGGGLGGISAAI) participates in FAD binding.

It belongs to the carotenoid/retinoid oxidoreductase family. CrtP subfamily. Requires FAD as cofactor.

The catalysed reaction is all-trans-4,4'-diaponeurosporene + 2 AH2 + 2 O2 = 4,4'-diaponeurosporenal + 2 A + 3 H2O. Its pathway is carotenoid biosynthesis; staphyloxanthin biosynthesis; staphyloxanthin from farnesyl diphosphate: step 3/5. Functionally, involved in the biosynthesis of the yellow-orange carotenoid staphyloxanthin, which plays a role in the virulence via its protective function against oxidative stress. Catalyzes the oxidation of the terminal methyl side group of 4,4'-diaponeurosporene to form 4,4'-diaponeurosporen-4-al. This chain is 4,4'-diaponeurosporene oxygenase, found in Staphylococcus aureus (strain USA300).